The chain runs to 181 residues: Thioredoxin-like protein CITRX1, chloroplastic (181 aa).

Positions 1–20 (MQAATLSFHPSAPPPQTSAC) are disordered. The transit peptide at 1 to 70 (MQAATLSFHP…PAVATGKYVR (70 aa)) directs the protein to the chloroplast. The Thioredoxin domain occupies 71 to 181 (EDYLVKKVSA…MMRDIINNDL (111 aa)). Residues Cys-104 and Cys-107 each act as nucleophile in the active site. Cys-104 and Cys-107 are disulfide-bonded.

Belongs to the thioredoxin family. Plant CITRX-type subfamily.

The protein resides in the plastid. Its subcellular location is the chloroplast. In terms of biological role, probable thiol-disulfide oxidoreductase that may play a role in proper chloroplast development. This is Thioredoxin-like protein CITRX1, chloroplastic from Nicotiana benthamiana.